The primary structure comprises 446 residues: Maltoporin (446 aa).

The signal sequence occupies residues 1–25; it reads MMITLRKLPLAVAVAAGVMSAQAMA.

Belongs to the porin LamB (TC 1.B.3) family. In terms of assembly, homotrimer formed of three 18-stranded antiparallel beta-barrels, containing three independent channels.

Its subcellular location is the cell outer membrane. It carries out the reaction beta-maltose(in) = beta-maltose(out). Involved in the transport of maltose and maltodextrins. The protein is Maltoporin of Escherichia coli (strain K12 / MC4100 / BW2952).